Here is a 228-residue protein sequence, read N- to C-terminus: MTQDELKALVAQAAADYVKQEVPEGAVLGVGTGSTANLFIDAVAAFKDRFAGAVSSSEASTRRLQQHGFKVLDLNEVDDIPVYVDGADEIDASGAMIKGGGGALTREKIVASVAGRFVCIADGSKLVETMGAFPLPVEVIPMARAAVARQVAALGGQPRLRMNKDGGIYKTDNGNVILDVSGLKITDPRGLEQSINQIPGVVTVGLFALRGANVLLLGTGEGVQRTDY.

Residues 32–35 (TGST), 85–88 (DGAD), and 98–101 (KGGG) contribute to the substrate site. The Proton acceptor role is filled by Glu107. Position 125 (Lys125) interacts with substrate.

It belongs to the ribose 5-phosphate isomerase family. Homodimer.

The catalysed reaction is aldehydo-D-ribose 5-phosphate = D-ribulose 5-phosphate. The protein operates within carbohydrate degradation; pentose phosphate pathway; D-ribose 5-phosphate from D-ribulose 5-phosphate (non-oxidative stage): step 1/1. Functionally, catalyzes the reversible conversion of ribose-5-phosphate to ribulose 5-phosphate. The chain is Ribose-5-phosphate isomerase A from Cupriavidus pinatubonensis (strain JMP 134 / LMG 1197) (Cupriavidus necator (strain JMP 134)).